Consider the following 345-residue polypeptide: Methylthioribose-1-phosphate isomerase (345 aa).

Residues 44-46 (RGA), Arg87, and Gln194 contribute to the substrate site. The active-site Proton donor is the Asp235. 245–246 (NK) serves as a coordination point for substrate.

It belongs to the eIF-2B alpha/beta/delta subunits family. MtnA subfamily.

It carries out the reaction 5-(methylsulfanyl)-alpha-D-ribose 1-phosphate = 5-(methylsulfanyl)-D-ribulose 1-phosphate. It functions in the pathway amino-acid biosynthesis; L-methionine biosynthesis via salvage pathway; L-methionine from S-methyl-5-thio-alpha-D-ribose 1-phosphate: step 1/6. Catalyzes the interconversion of methylthioribose-1-phosphate (MTR-1-P) into methylthioribulose-1-phosphate (MTRu-1-P). This Heliobacterium modesticaldum (strain ATCC 51547 / Ice1) protein is Methylthioribose-1-phosphate isomerase.